A 180-amino-acid polypeptide reads, in one-letter code: Ribosome maturation factor RimM (180 aa).

The PRC barrel domain occupies 99–179 (NNEYYWKDIV…IVIKNWKQTF (81 aa)).

Belongs to the RimM family. In terms of assembly, binds ribosomal protein uS19.

The protein localises to the cytoplasm. In terms of biological role, an accessory protein needed during the final step in the assembly of 30S ribosomal subunit, possibly for assembly of the head region. Essential for efficient processing of 16S rRNA. May be needed both before and after RbfA during the maturation of 16S rRNA. It has affinity for free ribosomal 30S subunits but not for 70S ribosomes. This is Ribosome maturation factor RimM from Buchnera aphidicola subsp. Baizongia pistaciae (strain Bp).